The primary structure comprises 194 residues: Peptidyl-tRNA hydrolase (194 aa).

Residue Tyr17 participates in tRNA binding. His22 functions as the Proton acceptor in the catalytic mechanism. The tRNA site is built by Phe68, Asn70, and Asn116.

This sequence belongs to the PTH family. Monomer.

The protein localises to the cytoplasm. It carries out the reaction an N-acyl-L-alpha-aminoacyl-tRNA + H2O = an N-acyl-L-amino acid + a tRNA + H(+). Its function is as follows. Hydrolyzes ribosome-free peptidyl-tRNAs (with 1 or more amino acids incorporated), which drop off the ribosome during protein synthesis, or as a result of ribosome stalling. Catalyzes the release of premature peptidyl moieties from peptidyl-tRNA molecules trapped in stalled 50S ribosomal subunits, and thus maintains levels of free tRNAs and 50S ribosomes. The sequence is that of Peptidyl-tRNA hydrolase from Pasteurella multocida (strain Pm70).